A 324-amino-acid chain; its full sequence is Acetyl-coenzyme A carboxylase carboxyl transferase subunit alpha (324 aa).

Residues 44–298 (QLEAKATQLR…KTAIVKSLDD (255 aa)) enclose the CoA carboxyltransferase C-terminal domain.

This sequence belongs to the AccA family. As to quaternary structure, acetyl-CoA carboxylase is a heterohexamer composed of biotin carboxyl carrier protein (AccB), biotin carboxylase (AccC) and two subunits each of ACCase subunit alpha (AccA) and ACCase subunit beta (AccD).

Its subcellular location is the cytoplasm. The catalysed reaction is N(6)-carboxybiotinyl-L-lysyl-[protein] + acetyl-CoA = N(6)-biotinyl-L-lysyl-[protein] + malonyl-CoA. The protein operates within lipid metabolism; malonyl-CoA biosynthesis; malonyl-CoA from acetyl-CoA: step 1/1. Component of the acetyl coenzyme A carboxylase (ACC) complex. First, biotin carboxylase catalyzes the carboxylation of biotin on its carrier protein (BCCP) and then the CO(2) group is transferred by the carboxyltransferase to acetyl-CoA to form malonyl-CoA. The sequence is that of Acetyl-coenzyme A carboxylase carboxyl transferase subunit alpha from Trichodesmium erythraeum (strain IMS101).